The following is a 466-amino-acid chain: FERM domain-containing protein 8 (466 aa).

At Met1 the chain carries N-acetylmethionine. The tract at residues 1-21 (MEGAEGNAGQPGPAERSHRSS) is disordered. Ser24 carries the phosphoserine modification. One can recognise an FERM domain in the interval 30-377 (ADVLVYLADD…YCIELSQAAE (348 aa)). Residues 379 to 409 (TLSQESASGPHEAPSPSPPPTQRPKLRRQGS) form a disordered region. Phosphoserine is present on Ser384. Residues 391-400 (APSPSPPPTQ) show a composition bias toward pro residues. Ser409 bears the Phosphoserine mark. The residue at position 420 (Thr420) is a Phosphothreonine. Phosphoserine occurs at positions 440 and 447. Residues 442–460 (FSRQLSSSQGSYTVVQPTD) show a composition bias toward polar residues. The tract at residues 442–466 (FSRQLSSSQGSYTVVQPTDDSLEQS) is disordered.

As to quaternary structure, interacts with iRhom proteins, including iRhom2/RHBDF2 (via cytoplasmic N-termini); this interaction leads to mutual protein stabilization. Interacts with LRP6; this interaction affects LRP6-binding to AXIN1. As to expression, widely expressed (at protein level).

Its subcellular location is the cytoplasm. It localises to the cytosol. The protein localises to the cell membrane. Its function is as follows. Promotes the cell surface stability of iRhom1/RHBDF1 and iRhom2/RHBDF2 and prevents their degradation via the endolysosomal pathway. By acting on iRhoms, involved in ADAM17-mediated shedding of TNF, amphiregulin/AREG, HBEGF and TGFA from the cell surface. Negatively regulates Wnt signaling, possibly by antagonizing the recruitment of AXIN1 to LRP6. This chain is FERM domain-containing protein 8 (Frmd8), found in Mus musculus (Mouse).